The following is a 410-amino-acid chain: UDP-N-acetylglucosamine--dolichyl-phosphate N-acetylglucosaminephosphotransferase (410 aa).

The Lumenal portion of the chain corresponds to 1-10 (MWAFPELPLP). The chain crosses the membrane as a helical span at residues 11-40 (LPLLVNLIGSLLGFVATVTLIPAFRSHFIA). The Cytoplasmic portion of the chain corresponds to 41 to 60 (ARLCGQDLNKLSQQQIPESQ). UDP-N-acetyl-alpha-D-glucosamine is bound by residues 46-48 (QDL) and E58. The helical transmembrane segment at 61–80 (GVISGAVFLIILFCFIPFPF) threads the bilayer. Topologically, residues 81–93 (LNCFVEEQCKAFP) are lumenal. A helical membrane pass occupies residues 94–120 (HHEFVALIGALLAICCMIFLGFADDVL). Residues 121–123 (NLR) are Cytoplasmic-facing. Residues 124 to 145 (WRHKLLLPTAASLPLLMVYFTN) form a helical membrane-spanning segment. K127 is a dolichyl phosphate binding site. The Lumenal segment spans residues 146 to 168 (FGNTTIVVPKPFRWILGLHLDLG). N-linked (GlcNAc...) asparagine glycosylation is present at N148. A helical membrane pass occupies residues 169-188 (ILYYVYMGLLAVFCTNAINI). 180–188 (VFCTNAINI) lines the dolichyl phosphate pocket. Residue N187 coordinates Mg(2+). Topologically, residues 189 to 194 (LAGING) are cytoplasmic. N193 contributes to the UDP-N-acetyl-alpha-D-glucosamine binding site. Residues 195–215 (LEAGQSLVISASIIVFNLVEL) traverse the membrane as a helical segment. Residues 216-220 (EGDYR) are Lumenal-facing. Residues 221–244 (DDHIFSLYFMIPFFFTTLGLLYHN) traverse the membrane as a helical segment. The Cytoplasmic segment spans residues 245–252 (WYPSRVFV). The helical transmembrane segment at 253-271 (GDTFCYFAGMTFAVVGILG) threads the bilayer. Position 254 (D254) interacts with Mg(2+). At 272-273 (HF) the chain is on the lumenal side. The chain crosses the membrane as a helical span at residues 274-295 (SKTMLLFFMPQVFNFLYSLPQL). Residues 296–377 (FHIIPCPRHR…LLLKVFGPIH (82 aa)) are Cytoplasmic-facing. UDP-N-acetyl-alpha-D-glucosamine is bound at residue 303–305 (RHR). The helical transmembrane segment at 378–402 (ERNLTLLLLLLQVLSSAATFSIRYQ) threads the bilayer. At 403–410 (LVRLFYDV) the chain is on the lumenal side.

Belongs to the glycosyltransferase 4 family. As to quaternary structure, homodimer. Mg(2+) serves as cofactor.

It is found in the endoplasmic reticulum membrane. It carries out the reaction a di-trans,poly-cis-dolichyl phosphate + UDP-N-acetyl-alpha-D-glucosamine = an N-acetyl-alpha-D-glucosaminyl-diphospho-di-trans,poly-cis-dolichol + UMP. Its pathway is protein modification; protein glycosylation. Its activity is regulated as follows. Inhibited by natural nucleoside antibiotic tunicamycin, which acts as a structural analog and competitor of UDP-GlcNAc. In terms of biological role, UDP-N-acetylglucosamine--dolichyl-phosphate N-acetylglucosaminephosphotransferase that operates in the biosynthetic pathway of dolichol-linked oligosaccharides, the glycan precursors employed in protein asparagine (N)-glycosylation. The assembly of dolichol-linked oligosaccharides begins on the cytosolic side of the endoplasmic reticulum membrane and finishes in its lumen. The sequential addition of sugars to dolichol pyrophosphate produces dolichol-linked oligosaccharides containing fourteen sugars, including two GlcNAcs, nine mannoses and three glucoses. Once assembled, the oligosaccharide is transferred from the lipid to nascent proteins by oligosaccharyltransferases. Catalyzes the initial step of dolichol-linked oligosaccharide biosynthesis, transfering GlcNAc-1-P from cytosolic UDP-GlcNAc onto the carrier lipid dolichyl phosphate (P-dolichol), yielding GlcNAc-P-P-dolichol embedded in the cytoplasmic leaflet of the endoplasmic reticulum membrane. The protein is UDP-N-acetylglucosamine--dolichyl-phosphate N-acetylglucosaminephosphotransferase of Mus musculus (Mouse).